The chain runs to 74 residues: MALSKMKDLLDLSDAEVETQILDLKRQLFQLRLQKATRQEVKPHQFKHLRHQLAQLMTLERQRQLTQQQTSVQE.

It belongs to the universal ribosomal protein uL29 family.

The protein is Large ribosomal subunit protein uL29 of Cyanothece sp. (strain PCC 7425 / ATCC 29141).